The sequence spans 484 residues: RxLR effector protein PexRD18 (484 aa).

An N-terminal signal peptide occupies residues 1–20 (MSHQRILLLLMAAFFAWVSA). The RxLR-dEER motif lies at 55–79 (RFLRLYDAEVRDTVRGDNDVDREER).

This sequence belongs to the RxLR effector family.

The protein localises to the secreted. Its subcellular location is the host cell membrane. Functionally, effector that enhances P.infestans colonization of Nicotiana benthamiana leaves. The polypeptide is RxLR effector protein PexRD18 (Phytophthora infestans (strain T30-4) (Potato late blight agent)).